We begin with the raw amino-acid sequence, 505 residues long: Dolichyl pyrophosphate Glc1Man9GlcNAc2 alpha-1,3-glucosyltransferase (505 aa).

Topologically, residues 1–3 are lumenal; that stretch reads MAE. A helical membrane pass occupies residues 4 to 24; the sequence is IYPSLVQCAIVATAFKVLLFP. At 25-101 the chain is on the cytoplasmic side; it reads AYKSTDFEVH…DSWQTVYFQR (77 aa). The chain crosses the membrane as a helical span at residues 102 to 122; the sequence is WTVIVTELVLLYALQMFVDST. The Lumenal portion of the chain corresponds to 123 to 128; the sequence is PGVSKR. Residues 129-149 form a helical membrane-spanning segment; that stretch reads AAHAAAVSILLSPGLLIIDHI. Topologically, residues 150 to 152 are cytoplasmic; the sequence is HFQ. A helical membrane pass occupies residues 153–169; the sequence is YNGVMYGILIASLVLAK. The Lumenal segment spans residues 170 to 173; that stretch reads KKSS. Residues 174 to 194 traverse the membrane as a helical segment; it reads LLASGLVFAALLCMKHIYLYL. Residues 195 to 224 are Cytoplasmic-facing; it reads APAYFVYLLRVYCLPPKLSPRSIFRIQFFN. The helical transmembrane segment at 225-245 threads the bilayer; sequence CVKLGGGIAAIFAAAFGPFAL. Residues 246–319 lie on the Lumenal side of the membrane; that stretch reads KNQIPQIFSR…TSFAVLPDIT (74 aa). A helical transmembrane segment spans residues 320 to 340; the sequence is PRMCFVLTLLFQAIPLIKLFM. Over 341-359 the chain is Cytoplasmic; the sequence is RPTWEGFIGGVTLCGYASF. The chain crosses the membrane as a helical span at residues 360-380; that stretch reads LFGWHVHEKAILLVIIPFSLI. Residues 381–386 are Lumenal-facing; that stretch reads ALKDRR. Residues 387–407 traverse the membrane as a helical segment; that stretch reads YLGAFRPLAVAGHVSLFPLIF. At 408 to 409 the chain is on the cytoplasmic side; it reads TP. The helical transmembrane segment at 410–430 threads the bilayer; the sequence is AEFPIKTVYTIFWLVLFLMAF. At 431–450 the chain is on the lumenal side; it reads DRLAPAPTRQRLFLFDRFST. Residues 451–471 form a helical membrane-spanning segment; that stretch reads AYITVSIPLIFYCSLMHGIIF. Residues 472-480 are Cytoplasmic-facing; sequence GKSYEFLPL. A helical transmembrane segment spans residues 481-501; it reads MFTSSYSAIGVVGSWLGFMVV. The Lumenal portion of the chain corresponds to 502-505; that stretch reads YFTE.

It belongs to the ALG6/ALG8 glucosyltransferase family.

It localises to the endoplasmic reticulum membrane. It carries out the reaction an alpha-D-Glc-(1-&gt;3)-alpha-D-Man-(1-&gt;2)-alpha-D-Man-(1-&gt;2)-alpha-D-Man-(1-&gt;3)-[alpha-D-Man-(1-&gt;2)-alpha-D-Man-(1-&gt;3)-[alpha-D-Man-(1-&gt;2)-alpha-D-Man-(1-&gt;6)]-alpha-D-Man-(1-&gt;6)]-beta-D-Man-(1-&gt;4)-beta-D-GlcNAc-(1-&gt;4)-alpha-D-GlcNAc-diphospho-di-trans,poly-cis-dolichol + a di-trans,poly-cis-dolichyl beta-D-glucosyl phosphate = an alpha-D-Glc-(1-&gt;3)-alpha-D-Glc-(1-&gt;3)-alpha-D-Man-(1-&gt;2)-alpha-D-Man-(1-&gt;2)-alpha-D-Man-(1-&gt;3)-[alpha-D-Man-(1-&gt;2)-alpha-D-Man-(1-&gt;3)-[alpha-D-Man-(1-&gt;2)-alpha-D-Man-(1-&gt;6)]-alpha-D-Man-(1-&gt;6)]-beta-D-Man-(1-&gt;4)-beta-D-GlcNAc-(1-&gt;4)-alpha-D-GlcNAc-diphospho-di-trans,poly-cis-dolichol + a di-trans,poly-cis-dolichyl phosphate + H(+). Its pathway is protein modification; protein glycosylation. Its function is as follows. Dolichyl pyrophosphate Glc1Man9GlcNAc2 alpha-1,3-glucosyltransferase that operates in the biosynthetic pathway of dolichol-linked oligosaccharides, the glycan precursors employed in protein asparagine (N)-glycosylation. The assembly of dolichol-linked oligosaccharides begins on the cytosolic side of the endoplasmic reticulum membrane and finishes in its lumen. The sequential addition of sugars to dolichol pyrophosphate produces dolichol-linked oligosaccharides containing fourteen sugars, including two GlcNAcs, nine mannoses and three glucoses. Once assembled, the oligosaccharide is transferred from the lipid to nascent proteins by oligosaccharyltransferases. In the lumen of the endoplasmic reticulum, adds the second glucose residue from dolichyl phosphate glucose (Dol-P-Glc) onto the lipid-linked oligosaccharide intermediate Glc(1)Man(9)GlcNAc(2)-PP-Dol to produce Glc(2)Man(9)GlcNAc(2)-PP-Dol. The protein is Dolichyl pyrophosphate Glc1Man9GlcNAc2 alpha-1,3-glucosyltransferase (alg-8) of Neurospora crassa (strain ATCC 24698 / 74-OR23-1A / CBS 708.71 / DSM 1257 / FGSC 987).